The primary structure comprises 205 residues: Putative 3-methyladenine DNA glycosylase (205 aa).

Belongs to the DNA glycosylase MPG family.

The chain is Putative 3-methyladenine DNA glycosylase from Bacillus cereus (strain ATCC 14579 / DSM 31 / CCUG 7414 / JCM 2152 / NBRC 15305 / NCIMB 9373 / NCTC 2599 / NRRL B-3711).